A 1041-amino-acid polypeptide reads, in one-letter code: Protein SMAX1-like (1041 aa).

Residues 8-188 (IQQTLTPEAA…KSIIEQSLSA (181 aa)) enclose the Clp R domain. Repeat regions lie at residues 12-98 (LTPE…LDRL) and 117-188 (VSNA…SLSA). Positions 189-205 (PSPCPSAAASTTTAGPG) are enriched in low complexity. Disordered regions lie at residues 189-214 (PSPC…PSPL), 482-513 (EAEQ…QNKA), and 889-913 (EGSH…VKRS). The segment covering 482-495 (EAEQTDKPASRPEA) has biased composition (basic and acidic residues). Over residues 891–900 (SHNSSDVSVE) the composition is skewed to polar residues.

This sequence belongs to the ClpA/ClpB family.

Its function is as follows. May act downstream of MAX2 to negatively regulate karrikins/strigolactone responses. Acts probably specifically in the karrikin pathway. May function in a transcriptional corepressor complex. This Oryza sativa subsp. japonica (Rice) protein is Protein SMAX1-like.